A 353-amino-acid chain; its full sequence is Suppressor of RNA-mediated gene silencing (353 aa).

Belongs to the phytoreovirus non-structural protein 10 family.

In terms of biological role, suppressor of RNA-mediated gene silencing, also known as post-transcriptional gene silencing (PTGS), a mechanism of plant viral defense that limits the accumulation of viral RNAs. This chain is Suppressor of RNA-mediated gene silencing, found in Rice dwarf virus (isolate Fujian) (RDV).